A 189-amino-acid polypeptide reads, in one-letter code: UPF0301 protein Plut_0637 (189 aa).

It belongs to the UPF0301 (AlgH) family.

This is UPF0301 protein Plut_0637 from Chlorobium luteolum (strain DSM 273 / BCRC 81028 / 2530) (Pelodictyon luteolum).